The primary structure comprises 249 residues: Probable transcriptional regulatory protein FN1661 (249 aa).

Positions 1 to 10 are enriched in polar residues; the sequence is MSGHSKWNNI. Residues 1–20 are disordered; it reads MSGHSKWNNIQHRKGAQDKK.

This sequence belongs to the TACO1 family.

It is found in the cytoplasm. The protein is Probable transcriptional regulatory protein FN1661 of Fusobacterium nucleatum subsp. nucleatum (strain ATCC 25586 / DSM 15643 / BCRC 10681 / CIP 101130 / JCM 8532 / KCTC 2640 / LMG 13131 / VPI 4355).